The chain runs to 380 residues: Flap endonuclease 1-A (380 aa).

Residues 1-105 (MGIKGLTKLL…QELAKRYSKR (105 aa)) are N-domain. D34 contacts Mg(2+). R71 contributes to the DNA binding site. Positions 87, 159, 161, 180, and 182 each coordinate Mg(2+). The tract at residues 123-254 (AIEKFSKRTV…QTALKLIRQH (132 aa)) is I-domain. Position 159 (E159) interacts with DNA. Positions 232 and 234 each coordinate DNA. D234 serves as a coordination point for Mg(2+). An interaction with PCNA region spans residues 336–344 (SQGRLESFF). The disordered stretch occupies residues 351-380 (SVPLKRKDTSEKPTKAVANKKTKGAGGKKK). Positions 355 to 364 (KRKDTSEKPT) are enriched in basic and acidic residues. Residues 368-380 (ANKKTKGAGGKKK) are compositionally biased toward basic residues.

It belongs to the XPG/RAD2 endonuclease family. FEN1 subfamily. As to quaternary structure, interacts with PCNA. Three molecules of FEN1 bind to one PCNA trimer with each molecule binding to one PCNA monomer. PCNA stimulates the nuclease activity without altering cleavage specificity. It depends on Mg(2+) as a cofactor. In terms of processing, phosphorylated. Phosphorylation upon DNA damage induces relocalization to the nuclear plasma. As to expression, strongly expressed in proliferating tissues: root and shoot apical meristem, tiller bud, leaf, ligule primordia, marginal meristem of young leaves and panicles. Not expressed in mature leaves when exposed to UV.

The protein resides in the nucleus. Its subcellular location is the nucleolus. It is found in the nucleoplasm. It localises to the mitochondrion. Its activity is regulated as follows. Inhibited by NaCl. Functionally, structure-specific nuclease with 5'-flap endonuclease and 5'-3' exonuclease activities involved in DNA replication and repair. During DNA replication, cleaves the 5'-overhanging flap structure that is generated by displacement synthesis when DNA polymerase encounters the 5'-end of a downstream Okazaki fragment. It enters the flap from the 5'-end and then tracks to cleave the flap base, leaving a nick for ligation. Also involved in the long patch base excision repair (LP-BER) pathway, by cleaving within the apurinic/apyrimidinic (AP) site-terminated flap. Acts as a genome stabilization factor that prevents flaps from equilibrating into structures that lead to duplications and deletions. Also possesses 5'-3' exonuclease activity on nicked or gapped double-stranded DNA, and exhibits RNase H activity. Also involved in replication and repair of rDNA and in repairing mitochondrial DNA. May be required for cell proliferation. The chain is Flap endonuclease 1-A from Oryza sativa subsp. japonica (Rice).